The chain runs to 165 residues: MSLAEDIALVARQESALVFEHFDENTAWQLGSRLRQMAVERGYPLVIDVRRFGQVLFTAALPGAVPDQAEWVRRKTNVVARFHRSSYAIGLELAEKQSSLEEKQGLPTVDFATHGGCFPIRVKSAGIIGCVTVSGLPQRADHELVVEAICALTGLDYATYKLPQA.

The protein belongs to the UPF0303 family.

The protein is UPF0303 protein ACP_1015 of Acidobacterium capsulatum (strain ATCC 51196 / DSM 11244 / BCRC 80197 / JCM 7670 / NBRC 15755 / NCIMB 13165 / 161).